The primary structure comprises 102 residues: Large ribosomal subunit protein bL21 (102 aa).

The protein belongs to the bacterial ribosomal protein bL21 family. As to quaternary structure, part of the 50S ribosomal subunit. Contacts protein L20.

In terms of biological role, this protein binds to 23S rRNA in the presence of protein L20. The polypeptide is Large ribosomal subunit protein bL21 (Citrifermentans bemidjiense (strain ATCC BAA-1014 / DSM 16622 / JCM 12645 / Bem) (Geobacter bemidjiensis)).